A 375-amino-acid polypeptide reads, in one-letter code: Transaldolase (375 aa).

The Schiff-base intermediate with substrate role is filled by lysine 145.

The protein belongs to the transaldolase family. Type 2 subfamily.

The protein resides in the cytoplasm. The enzyme catalyses D-sedoheptulose 7-phosphate + D-glyceraldehyde 3-phosphate = D-erythrose 4-phosphate + beta-D-fructose 6-phosphate. The protein operates within carbohydrate degradation; pentose phosphate pathway; D-glyceraldehyde 3-phosphate and beta-D-fructose 6-phosphate from D-ribose 5-phosphate and D-xylulose 5-phosphate (non-oxidative stage): step 2/3. In terms of biological role, transaldolase is important for the balance of metabolites in the pentose-phosphate pathway. The chain is Transaldolase from Mycobacterium leprae (strain Br4923).